Here is an 88-residue protein sequence, read N- to C-terminus: Small ribosomal subunit protein uS19 (88 aa).

The protein belongs to the universal ribosomal protein uS19 family.

Functionally, protein S19 forms a complex with S13 that binds strongly to the 16S ribosomal RNA. The chain is Small ribosomal subunit protein uS19 (rpsS) from Chlamydia muridarum (strain MoPn / Nigg).